The following is a 383-amino-acid chain: Cytochrome b (383 aa).

4 helical membrane-spanning segments follow: residues 31–51, 75–97, 112–132, and 178–198; these read FGSL…FLAM, WLMR…VHIF, LWCS…MGYV, and FFSL…IHLI. Positions 81 and 95 each coordinate heme b. Residues His182 and His196 each coordinate heme b. His201 is a binding site for a ubiquinone. The next 4 helical transmembrane spans lie at 224–244, 288–308, 320–340, and 347–367; these read FYTK…IFIF, IGGV…PFTN, IFKV…WVGQ, and YTEI…IIIP.

This sequence belongs to the cytochrome b family. Fungal cytochrome b-c1 complex contains 10 subunits; 3 respiratory subunits, 2 core proteins and 5 low-molecular weight proteins. Cytochrome b-c1 complex is a homodimer. Heme b is required as a cofactor.

It is found in the mitochondrion inner membrane. Functionally, component of the ubiquinol-cytochrome c reductase complex (complex III or cytochrome b-c1 complex) that is part of the mitochondrial respiratory chain. The b-c1 complex mediates electron transfer from ubiquinol to cytochrome c. Contributes to the generation of a proton gradient across the mitochondrial membrane that is then used for ATP synthesis. The chain is Cytochrome b (cob) from Phytophthora megasperma (Potato pink rot fungus).